Here is an 856-residue protein sequence, read N- to C-terminus: DNA mismatch repair protein MutS (856 aa).

An ATP-binding site is contributed by 609-616 (GPNMSGKS).

The protein belongs to the DNA mismatch repair MutS family.

Functionally, this protein is involved in the repair of mismatches in DNA. It is possible that it carries out the mismatch recognition step. This protein has a weak ATPase activity. The protein is DNA mismatch repair protein MutS of Finegoldia magna (strain ATCC 29328 / DSM 20472 / WAL 2508) (Peptostreptococcus magnus).